A 275-amino-acid polypeptide reads, in one-letter code: NH(3)-dependent NAD(+) synthetase (275 aa).

46–53 (GISGGQDS) is a binding site for ATP. D52 provides a ligand contact to Mg(2+). R140 provides a ligand contact to deamido-NAD(+). Position 160 (T160) interacts with ATP. Mg(2+) is bound at residue E165. The deamido-NAD(+) site is built by K173 and D180. K189 and T211 together coordinate ATP. 260–261 (HK) contributes to the deamido-NAD(+) binding site.

This sequence belongs to the NAD synthetase family. As to quaternary structure, homodimer.

The enzyme catalyses deamido-NAD(+) + NH4(+) + ATP = AMP + diphosphate + NAD(+) + H(+). The protein operates within cofactor biosynthesis; NAD(+) biosynthesis; NAD(+) from deamido-NAD(+) (ammonia route): step 1/1. Catalyzes the ATP-dependent amidation of deamido-NAD to form NAD. Uses ammonia as a nitrogen source. The sequence is that of NH(3)-dependent NAD(+) synthetase from Enterobacter sp. (strain 638).